A 304-amino-acid chain; its full sequence is Oxygen-dependent coproporphyrinogen-III oxidase (304 aa).

Position 94 (Ser-94) interacts with substrate. Positions 98 and 108 each coordinate a divalent metal cation. The active-site Proton donor is the His-108. 110 to 112 (NVR) is a substrate binding site. A divalent metal cation-binding residues include His-147 and His-177. The tract at residues 242-277 (YVEFNLVYDRGTLFGLQSGGRTESILMSLPPVAHWR) is important for dimerization. Substrate is bound at residue 260 to 262 (GGR).

This sequence belongs to the aerobic coproporphyrinogen-III oxidase family. Homodimer. It depends on a divalent metal cation as a cofactor.

Its subcellular location is the cytoplasm. The catalysed reaction is coproporphyrinogen III + O2 + 2 H(+) = protoporphyrinogen IX + 2 CO2 + 2 H2O. Its pathway is porphyrin-containing compound metabolism; protoporphyrin-IX biosynthesis; protoporphyrinogen-IX from coproporphyrinogen-III (O2 route): step 1/1. In terms of biological role, involved in the heme biosynthesis. Catalyzes the aerobic oxidative decarboxylation of propionate groups of rings A and B of coproporphyrinogen-III to yield the vinyl groups in protoporphyrinogen-IX. In Methylococcus capsulatus (strain ATCC 33009 / NCIMB 11132 / Bath), this protein is Oxygen-dependent coproporphyrinogen-III oxidase.